The chain runs to 572 residues: Receptor-transporting protein 5 (572 aa).

The segment at serine 52–glutamate 148 adopts a 3CxxC-type zinc-finger fold. The chain crosses the membrane as a helical span at residues phenylalanine 544 to methionine 560.

The protein localises to the membrane. The chain is Receptor-transporting protein 5 (RTP5) from Homo sapiens (Human).